The primary structure comprises 119 residues: Large ribosomal subunit protein uL18 (119 aa).

The protein belongs to the universal ribosomal protein uL18 family. Part of the 50S ribosomal subunit; part of the 5S rRNA/L5/L18/L25 subcomplex. Contacts the 5S and 23S rRNAs.

In terms of biological role, this is one of the proteins that bind and probably mediate the attachment of the 5S RNA into the large ribosomal subunit, where it forms part of the central protuberance. The sequence is that of Large ribosomal subunit protein uL18 from Anaeromyxobacter sp. (strain Fw109-5).